The sequence spans 935 residues: C-1-tetrahydrofolate synthase, cytoplasmic (935 aa).

Met1 bears the N-acetylmethionine mark. The interval 2 to 291 (APAGILNGKV…MLMQSTVESA (290 aa)) is methylenetetrahydrofolate dehydrogenase and methenyltetrahydrofolate cyclohydrolase (D/C) domain. Substrate contacts are provided by residues 52–56 (YINVK) and 99–101 (VQL). The active site involves Lys56. Residues 172 to 174 (GRS) and Ser197 contribute to the NADP(+) site. Residue 272–276 (PGGVG) coordinates substrate. The interval 310–935 (LNLKTPVPSD…PETEQVNGLF (626 aa)) is formyltetrahydrofolate synthetase domain. Ser318 carries the post-translational modification Phosphoserine. An ATP-binding site is contributed by 380-387 (TPLGEGKS). Phosphoserine occurs at positions 413 and 490.

The protein in the N-terminal section; belongs to the tetrahydrofolate dehydrogenase/cyclohydrolase family. In the C-terminal section; belongs to the formate--tetrahydrofolate ligase family. Homodimer.

Its subcellular location is the cytoplasm. It carries out the reaction (6R)-5,10-methylene-5,6,7,8-tetrahydrofolate + NADP(+) = (6R)-5,10-methenyltetrahydrofolate + NADPH. The enzyme catalyses (6R)-5,10-methenyltetrahydrofolate + H2O = (6R)-10-formyltetrahydrofolate + H(+). The catalysed reaction is (6S)-5,6,7,8-tetrahydrofolate + formate + ATP = (6R)-10-formyltetrahydrofolate + ADP + phosphate. The protein operates within one-carbon metabolism; tetrahydrofolate interconversion. Its function is as follows. Trifunctional enzyme that catalyzes the interconversion of three forms of one-carbon-substituted tetrahydrofolate: (6R)-5,10-methylene-5,6,7,8-tetrahydrofolate, 5,10-methenyltetrahydrofolate and (6S)-10-formyltetrahydrofolate. These derivatives of tetrahydrofolate are differentially required in nucleotide and amino acid biosynthesis, (6S)-10-formyltetrahydrofolate being required for purine biosynthesis while (6R)-5,10-methylene-5,6,7,8-tetrahydrofolate is used for serine and methionine biosynthesis for instance. This Rattus norvegicus (Rat) protein is C-1-tetrahydrofolate synthase, cytoplasmic (Mthfd1).